We begin with the raw amino-acid sequence, 231 residues long: Endonuclease NucS (231 aa).

It belongs to the NucS endonuclease family.

It is found in the cytoplasm. Functionally, cleaves both 3' and 5' ssDNA extremities of branched DNA structures. This chain is Endonuclease NucS, found in Beutenbergia cavernae (strain ATCC BAA-8 / DSM 12333 / CCUG 43141 / JCM 11478 / NBRC 16432 / NCIMB 13614 / HKI 0122).